An 813-amino-acid polypeptide reads, in one-letter code: Calpain-7 (813 aa).

Residue methionine 1 is modified to N-acetylmethionine. Threonine 95 carries the phosphothreonine modification. The Calpain catalytic domain occupies 232–540; the sequence is RERFAYPMPF…YDVIYLSWNP (309 aa). Residues cysteine 290, histidine 458, and asparagine 478 contribute to the active site. Residues 541–701 are domain III; the sequence is GLLKESTCIH…INGKWSGQSA (161 aa). Residues 702–813 form a domain N region; sequence GGCGNFQETH…VIPIKTTQLQ (112 aa).

Belongs to the peptidase C2 family.

The protein localises to the nucleus. Its function is as follows. Calcium-regulated non-lysosomal thiol-protease. This Sus scrofa (Pig) protein is Calpain-7 (CAPN7).